Reading from the N-terminus, the 200-residue chain is Dephospho-CoA kinase (200 aa).

Positions Val3–Arg200 constitute a DPCK domain. Residue Gly11–Thr16 coordinates ATP.

It belongs to the CoaE family.

It is found in the cytoplasm. It catalyses the reaction 3'-dephospho-CoA + ATP = ADP + CoA + H(+). It functions in the pathway cofactor biosynthesis; coenzyme A biosynthesis; CoA from (R)-pantothenate: step 5/5. Functionally, catalyzes the phosphorylation of the 3'-hydroxyl group of dephosphocoenzyme A to form coenzyme A. The sequence is that of Dephospho-CoA kinase from Brucella abortus (strain 2308).